The chain runs to 472 residues: MLCHVTRPDAVVMEIEVDAKANGEDCLNKVCRKLGIIEVDYFGLQFSGSKGENLWLNLRNRISQQMDNLTPCRLRLRVKFFVEPHLILQEQTRHLFFMHVKEDLHRGHLRMCSEQAQELSALLAQAEFGDYNQNTAKYWYTELCGSEPNQTTINSIIAKHKALEGLSQASVEYQALQLVSSLEHYGVEWHWARDAEAQRLAIGVGPEGIAICRDDFSLVNRISYPIIQIATQSGKSVYLTVTKESSDSVVLLFKLISNRAASGLYRAITETHAFYRCDTVTNAVMMQYSRDFKGHLASLFLNENINLGKKYVFDIRRTSKEVYDYARRALYNAGIVDMMSRPGERTPSNRSPSREQEGALDCGGCQQSRLLQEKLQKLREALLCMLCCEEEIDAAFCPCGHMVCCQNCAAQLQSCPVCRSEVEHVQHVYLPTCTSLLNLTIGENSPEPIHRGMAAHTCTTNDYSTSEKIYQN.

Residues Met1–Thr279 form the FERM domain. The RING-type zinc-finger motif lies at Cys384–Arg419.

Interacts with anxa5. As to expression, ubiquitous.

The protein localises to the cytoplasm. It is found in the cytosol. It catalyses the reaction S-ubiquitinyl-[E2 ubiquitin-conjugating enzyme]-L-cysteine + [acceptor protein]-L-lysine = [E2 ubiquitin-conjugating enzyme]-L-cysteine + N(6)-ubiquitinyl-[acceptor protein]-L-lysine.. It functions in the pathway protein modification; protein ubiquitination. E3 ubiquitin-protein ligase that mediates ubiquitination and subsequent proteasomal degradation of myosin regulatory light chain (MRLC). Regulates cell movements during gastrulation by acting downstream of fz7 to antagonize the frizzled-signaling pathway. The protein is E3 ubiquitin-protein ligase MYLIP-A (mylipa) of Danio rerio (Zebrafish).